The following is a 109-amino-acid chain: RNA-binding protein Hfq (109 aa).

Residues 9–68 form the Sm domain; the sequence is DPFLNALRKEKVNVSVYLVNGIKLQGQVEAFDQFCIVLRNTVNQMVYKHAISTIVPAKSV. The segment at 77 to 109 is disordered; that stretch reads PYHQNSNDEQDENVDDIHSDDLEIQENEGNIHE.

This sequence belongs to the Hfq family. In terms of assembly, homohexamer.

Its function is as follows. RNA chaperone that binds small regulatory RNA (sRNAs) and mRNAs to facilitate mRNA translational regulation in response to envelope stress, environmental stress and changes in metabolite concentrations. Also binds with high specificity to tRNAs. The polypeptide is RNA-binding protein Hfq (Francisella tularensis subsp. mediasiatica (strain FSC147)).